A 309-amino-acid polypeptide reads, in one-letter code: Fe-S cluster assembly protein dre2 (309 aa).

An N-terminal SAM-like domain region spans residues 1-132 (MTTTIVLASP…LRRPAQVEAV (132 aa)). The segment at 133-195 (PLKLSTKKSA…DALVSDEETQ (63 aa)) is linker. Cysteine 207, cysteine 216, cysteine 219, and cysteine 221 together coordinate [2Fe-2S] cluster. The fe-S binding site A stretch occupies residues 207–221 (CSKPGKKKRCKNCTC). [4Fe-4S] cluster is bound by residues cysteine 265, cysteine 268, cysteine 276, and cysteine 279. 2 short sequence motifs (cx2C motif) span residues 265-268 (CGSC) and 276-279 (CSGC). Residues 265–279 (CGSCYLGDAFRCSGC) are fe-S binding site B.

It belongs to the anamorsin family. As to quaternary structure, monomer. Interacts with TAH18. Interacts with MIA40. [2Fe-2S] cluster is required as a cofactor. It depends on [4Fe-4S] cluster as a cofactor.

The protein resides in the cytoplasm. It localises to the mitochondrion intermembrane space. Functionally, component of the cytosolic iron-sulfur (Fe-S) protein assembly (CIA) machinery required for the maturation of extramitochondrial Fe-S proteins. Part of an electron transfer chain functioning in an early step of cytosolic Fe-S biogenesis, facilitating the de novo assembly of a [4Fe-4S] cluster on the scaffold complex CFD1-NBP35. Electrons are transferred to DRE2 from NADPH via the FAD- and FMN-containing protein TAH18. TAH18-DRE2 are also required for the assembly of the diferric tyrosyl radical cofactor of ribonucleotide reductase (RNR), probably by providing electrons for reduction during radical cofactor maturation in the catalytic small subunit RNR2. This chain is Fe-S cluster assembly protein dre2, found in Schizosaccharomyces japonicus (strain yFS275 / FY16936) (Fission yeast).